A 1009-amino-acid chain; its full sequence is 2-oxoglutarate dehydrogenase, mitochondrial (1009 aa).

The N-terminal 39 residues, 1–39 (MLRFIPSSAKARALRRSAVTAYRLNRLTCLSSLQQNRTF), are a transit peptide targeting the mitochondrion. Thiamine diphosphate is bound by residues Arg-305, Asp-404, Asn-437, Ile-439, and Gln-669. The Mg(2+) site is built by Asp-404, Asn-437, and Ile-439.

It belongs to the alpha-ketoglutarate dehydrogenase family. Requires thiamine diphosphate as cofactor. Mg(2+) is required as a cofactor.

It is found in the mitochondrion matrix. The catalysed reaction is N(6)-[(R)-lipoyl]-L-lysyl-[protein] + 2-oxoglutarate + H(+) = N(6)-[(R)-S(8)-succinyldihydrolipoyl]-L-lysyl-[protein] + CO2. Its activity is regulated as follows. Catabolite repressed. Functionally, the 2-oxoglutarate dehydrogenase complex catalyzes the overall conversion of 2-oxoglutarate to succinyl-CoA and CO(2). It contains multiple copies of three enzymatic components: 2-oxoglutarate dehydrogenase (E1), dihydrolipoamide succinyltransferase (E2) and lipoamide dehydrogenase (E3). The protein is 2-oxoglutarate dehydrogenase, mitochondrial (kgd1) of Schizosaccharomyces pombe (strain 972 / ATCC 24843) (Fission yeast).